Reading from the N-terminus, the 365-residue chain is P43 5S RNA-binding protein (365 aa).

9 C2H2-type zinc fingers span residues 15–39, 45–69, 75–100, 106–130, 136–160, 163–187, 191–213, 220–245, and 251–275; these read FRCP…MAGH, WKCG…MKRH, HSCP…LYKH, LKCS…VSEH, SVCD…HRRH, YRCS…LKKH, LQCA…KATH, LPCP…RKVH, and HRCP…LVVH.

The 42S RNP particle comprises four subunits each of which contains one molecule of 5S RNA, three molecules of tRNA, two molecules of p50 (EF1-alpha) and one molecule of the 5S RNA binding protein 43.

In terms of biological role, p43 is a 5S RNA binding protein which is a major constituent of oocytes and comprises part of a 42S ribonucleoprotein storage particle. The protein is P43 5S RNA-binding protein of Xenopus borealis (Kenyan clawed frog).